The sequence spans 476 residues: Protein transport protein Sec61 subunit alpha isoform B (476 aa).

The Cytoplasmic segment spans residues 2 to 33 (GIKFLEVIKPFCAVLPEIQKPERKIQFREKVL). Residues 34 to 53 (WTAITLFIFLVCCQIPLFGI) form a helical membrane-spanning segment. At 54–76 (MSSDSADPFYWMRVILASNRGTL) the chain is on the lumenal side. A helical transmembrane segment spans residues 77-96 (MELGISPIVTSGLIMQLLAG). Topologically, residues 97-117 (AKIIEVGDTPKDRALFNGAQK) are cytoplasmic. A helical transmembrane segment spans residues 118–138 (LFGMIITIGQAIVYVMTGMYG). The Lumenal segment spans residues 139–144 (DPSDMG). A helical transmembrane segment spans residues 145 to 165 (AGICLLIIIQLFVAGLIVLLL). The Cytoplasmic segment spans residues 166–172 (DELLQKG). A helical transmembrane segment spans residues 173–193 (YGLGSGISLFIATNICETIVW). The Lumenal segment spans residues 194–240 (KAFSPTTVNTGRGTEFEGAIIALFHLLATRTDKVRALREAFYRQNLP). The chain crosses the membrane as a helical span at residues 241-261 (NLMNLLATVFVFGVVIYFQGF). At 262 to 288 (RVDLPIKSARYRGQYNTYPIKLFYTSN) the chain is on the cytoplasmic side. A helical membrane pass occupies residues 289 to 309 (IPIILQSALVSNLYVISQMLS). Residues 310–354 (TRFSGNFLVNLLGTWSDTSSGGPARAYPVGGLCYYFSPPESFGSV) are Lumenal-facing. The chain crosses the membrane as a helical span at residues 355–375 (LDDPIHAAIYICFMLGSCAFF). The Cytoplasmic segment spans residues 376-420 (SKTWIEVSGSSAKDVAKQLKEQQMVMRGHRETSMVHELNRYIPTA). Residues 421-441 (AAFGGLCIGGLSVMADFLGAI) traverse the membrane as a helical segment. The Lumenal portion of the chain corresponds to 442–445 (GSGT). The helical transmembrane segment at 446–462 (GILLAVTIIYQYFEIFV) threads the bilayer. The Cytoplasmic portion of the chain corresponds to 463-476 (KEQSEMGSMGALLF).

The protein belongs to the SecY/SEC61-alpha family. In terms of assembly, the SEC61 channel-forming translocon complex consists of channel-forming core components SEC61A1, SEC61B and SEC61G and different auxiliary components such as SEC62 and SEC63.

The protein localises to the endoplasmic reticulum membrane. Its function is as follows. Component of SEC61 channel-forming translocon complex that mediates transport of signal peptide-containing precursor polypeptides across the endoplasmic reticulum (ER). Forms a ribosome receptor and a gated pore in the ER membrane, both functions required for cotranslational translocation of nascent polypeptides. The protein is Protein transport protein Sec61 subunit alpha isoform B (sec61ab) of Oncorhynchus mykiss (Rainbow trout).